A 474-amino-acid chain; its full sequence is L-lactate permease (474 aa).

The next 11 helical transmembrane spans lie at alanine 4 to phenylalanine 21, alanine 28 to isoleucine 48, phenylalanine 63 to glycine 85, leucine 105 to isoleucine 127, alanine 142 to threonine 164, leucine 177 to leucine 199, glycine 209 to tyrosine 231, serine 238 to leucine 255, phenylalanine 281 to alanine 303, tryptophan 324 to serine 346, and isoleucine 387 to leucine 409.

It belongs to the lactate permease family.

The protein localises to the cell membrane. In terms of biological role, plays a role in L-lactate utilization. In Streptococcus iniae (Streptococcus shiloi), this protein is L-lactate permease (lctP).